Reading from the N-terminus, the 122-residue chain is Small ribosomal subunit protein uS13 (122 aa).

Residues 89 to 122 form a disordered region; it reads GLRHRRGLPARGQRTKTNARTRKGPRRGVAGKRK.

This sequence belongs to the universal ribosomal protein uS13 family. In terms of assembly, part of the 30S ribosomal subunit. Forms a loose heterodimer with protein S19. Forms two bridges to the 50S subunit in the 70S ribosome.

Functionally, located at the top of the head of the 30S subunit, it contacts several helices of the 16S rRNA. In the 70S ribosome it contacts the 23S rRNA (bridge B1a) and protein L5 of the 50S subunit (bridge B1b), connecting the 2 subunits; these bridges are implicated in subunit movement. Contacts the tRNAs in the A and P-sites. This is Small ribosomal subunit protein uS13 from Oleidesulfovibrio alaskensis (strain ATCC BAA-1058 / DSM 17464 / G20) (Desulfovibrio alaskensis).